Reading from the N-terminus, the 360-residue chain is DNA replication and repair protein RecF (360 aa).

30–37 (GQNGSGKT) lines the ATP pocket.

Belongs to the RecF family.

Its subcellular location is the cytoplasm. The RecF protein is involved in DNA metabolism; it is required for DNA replication and normal SOS inducibility. RecF binds preferentially to single-stranded, linear DNA. It also seems to bind ATP. The chain is DNA replication and repair protein RecF from Shewanella sp. (strain MR-4).